The primary structure comprises 226 residues: Sugar transporter SWEET1 (226 aa).

A run of 7 helical transmembrane segments spans residues Leu-8–Cys-28, Gly-42–Thr-62, Ile-67–Val-87, Ala-94–Thr-114, Ile-127–Leu-147, Leu-161–Ile-181, and Phe-185–Val-205. Positions Leu-8–Lys-92 constitute a MtN3/slv 1 domain. Positions Gly-129–Arg-210 constitute a MtN3/slv 2 domain.

It belongs to the SWEET sugar transporter family.

Its subcellular location is the golgi apparatus membrane. The protein resides in the cell membrane. Its function is as follows. Mediates both low-affinity uptake and efflux of sugar across the membrane. In Drosophila pseudoobscura pseudoobscura (Fruit fly), this protein is Sugar transporter SWEET1 (slv).